A 465-amino-acid chain; its full sequence is ATP-dependent protease ATPase subunit HslU (465 aa).

Residues valine 20, 62-67 (GVGKTE), aspartate 277, glutamate 343, and arginine 415 each bind ATP.

The protein belongs to the ClpX chaperone family. HslU subfamily. As to quaternary structure, a double ring-shaped homohexamer of HslV is capped on each side by a ring-shaped HslU homohexamer. The assembly of the HslU/HslV complex is dependent on binding of ATP.

The protein localises to the cytoplasm. ATPase subunit of a proteasome-like degradation complex; this subunit has chaperone activity. The binding of ATP and its subsequent hydrolysis by HslU are essential for unfolding of protein substrates subsequently hydrolyzed by HslV. HslU recognizes the N-terminal part of its protein substrates and unfolds these before they are guided to HslV for hydrolysis. This chain is ATP-dependent protease ATPase subunit HslU, found in Geobacillus kaustophilus (strain HTA426).